A 323-amino-acid chain; its full sequence is UDP-galactose/UDP-glucose transporter 7 (323 aa).

Residues M1 to T10 are Cytoplasmic-facing. Residues S11–I31 form a helical membrane-spanning segment. Residues N32–V35 are Lumenal-facing. Residues I36–H58 form a helical membrane-spanning segment. Over F59–K78 the chain is Cytoplasmic. The chain crosses the membrane as a helical span at residues L79–L97. Residues K98 to N101 lie on the Lumenal side of the membrane. The helical transmembrane segment at I102 to G124 threads the bilayer. The Cytoplasmic segment spans residues K125–V132. A helical transmembrane segment spans residues A133–F153. Position 154 (D154) is a topological domain, lumenal. A helical transmembrane segment spans residues L155 to V175. At E176–S186 the chain is on the cytoplasmic side. The chain crosses the membrane as a helical span at residues I187–V207. At T208–P226 the chain is on the lumenal side. A helical membrane pass occupies residues F227–L247. Topologically, residues C248–N252 are cytoplasmic. A helical membrane pass occupies residues S253 to L275. Topologically, residues L276–G278 are lumenal. Residues V279 to Y301 form a helical membrane-spanning segment. The Cytoplasmic segment spans residues A302–K323.

Belongs to the TPT transporter family. UGnT (TC 2.A.7.15) subfamily. Widely expressed with highest expression in roots.

It localises to the golgi apparatus membrane. Functionally, nucleotide-sugar transporter that transports UDP-glucose and UDP-galactose. Plays a role in lateral root and root hair development. The chain is UDP-galactose/UDP-glucose transporter 7 from Arabidopsis thaliana (Mouse-ear cress).